Consider the following 721-residue polypeptide: Tripartite terminase subunit 1 (721 aa).

The C3H1-type zinc-finger motif lies at 189–217; sequence CLKCYEELSLVPNQGKSIRKRLAGKFCNH. Residue 625-632 coordinates ATP; that stretch reads YNDVFGKQ.

It belongs to the herpesviridae TRM1 protein family. As to quaternary structure, associates with TRM2 and TRM3 to form the tripartite terminase complex. Interacts with portal protein.

The protein resides in the host nucleus. Functionally, component of the molecular motor that translocates viral genomic DNA in empty capsid during DNA packaging. Forms a tripartite terminase complex together with TRM2 and TRM3 in the host cytoplasm. Once the complex reaches the host nucleus, it interacts with the capsid portal vertex. This portal forms a ring in which genomic DNA is translocated into the capsid. TRM1 carries an endonuclease activity that plays an important role for the cleavage of concatemeric viral DNA into unit length genomes. The sequence is that of Tripartite terminase subunit 1 from Homo sapiens (Human).